The following is a 206-amino-acid chain: Adenine phosphoribosyltransferase (206 aa).

The protein belongs to the purine/pyrimidine phosphoribosyltransferase family. In terms of assembly, homodimer.

It is found in the cytoplasm. The enzyme catalyses AMP + diphosphate = 5-phospho-alpha-D-ribose 1-diphosphate + adenine. Its pathway is purine metabolism; AMP biosynthesis via salvage pathway; AMP from adenine: step 1/1. Catalyzes a salvage reaction resulting in the formation of AMP, that is energically less costly than de novo synthesis. The chain is Adenine phosphoribosyltransferase from Burkholderia mallei (strain NCTC 10229).